The following is a 345-amino-acid chain: D-alanine--D-alanine ligase (345 aa).

The region spanning 133–340 (KLYAKERGVK…IDYRYIHQIQ (208 aa)) is the ATP-grasp domain. ATP is bound at residue 162 to 211 (PLIVKPLRLGSSIGVSIAKNRQELDYALDVAFEFDEAALLEPFMQGIKEY). The Mg(2+) site is built by Asp-284, Glu-296, and Asn-298.

Belongs to the D-alanine--D-alanine ligase family. Mg(2+) is required as a cofactor. Requires Mn(2+) as cofactor.

The protein localises to the cytoplasm. It catalyses the reaction 2 D-alanine + ATP = D-alanyl-D-alanine + ADP + phosphate + H(+). Its pathway is cell wall biogenesis; peptidoglycan biosynthesis. Functionally, cell wall formation. This is D-alanine--D-alanine ligase from Wolinella succinogenes (strain ATCC 29543 / DSM 1740 / CCUG 13145 / JCM 31913 / LMG 7466 / NCTC 11488 / FDC 602W) (Vibrio succinogenes).